The primary structure comprises 748 residues: Structure-specific endonuclease subunit SLX4 (748 aa).

A compositionally biased stretch (polar residues) spans 62 to 75 (KSVTAQKSPMTQET). The segment at 62–104 (KSVTAQKSPMTQETTKNDTERNKDVDKSCNPVSTSHPDLGGSN) is disordered. T72 carries the post-translational modification Phosphothreonine; by ATR and ATM. The span at 76 to 88 (TKNDTERNKDVDK) shows a compositional bias: basic and acidic residues. The residue at position 113 (T113) is a Phosphothreonine; by ATR and ATM. 2 disordered regions span residues 215–236 (IKTQ…KGEK) and 277–303 (EKSS…PPEL). Over residues 222–236 (NSDKPPRARNNKGEK) the composition is skewed to basic and acidic residues. Positions 277–298 (EKSSNSLDNQESSQQRLWTASQ) are enriched in polar residues. S289 bears the Phosphoserine; by ATR and ATM mark. T319 is modified (phosphothreonine; by ATR and ATM). 2 positions are modified to phosphoserine; by ATR and ATM: S329 and S355. Over residues 591–602 (ISTKDSTQNPTT) the composition is skewed to polar residues. Residues 591–610 (ISTKDSTQNPTTSNDIIDTS) are disordered.

Belongs to the SLX4 family. As to quaternary structure, forms a heterodimer with SLX1. Interacts with RAD1; catalytic subunit of the RAD1-RAD10 endonuclease. Interacts with RTT107. In terms of processing, phosphorylated by ATR (MEC1) and ATM (TEL1) upon DNA damage. This appears to be required for the function with the RAD1-RAD10 endonuclease.

The protein resides in the nucleus. It localises to the cytoplasm. Functionally, regulatory subunit that interacts with and increases the activity of different structure-specific endonucleases. Has several distinct roles in protecting genome stability by resolving diverse forms of deleterious DNA structures. Component of the SLX1-SLX4 structure-specific endonuclease that resolves DNA secondary structures generated during DNA repair and recombination. Has endonuclease activity towards branched DNA substrates, introducing single-strand cuts in duplex DNA close to junctions with ss-DNA. Has a preference for simple Y, 5'-flap and replication fork-like structures. It cleaves the strand bearing the 5'-non-homologous arm at the branch site junction and generates ligatable, nicked products from the 5'-flap or replication fork substrates. Plays a critical role in maintaining the integrity of the ribosomal DNA (rDNA) loci, where it has a role in re-starting stalled replication forks. Has Holliday junction resolvase activity in vitro. Interacts with the structure-specific RAD1-RAD10 endonuclease and promotes RAD1-RAD10-dependent 3'-non-homologous tail removal (NHTR) during repair of double-strand breaks by single-strand annealing. SLX4 also promotes recovery from DNA-alkylation-induced replisome stalling during DNA replication by facilitating the error-free mode of lesion bypass. This does not require SLX1 or RAD1-RAD10, but probably RTT107. In Saccharomyces cerevisiae (strain RM11-1a) (Baker's yeast), this protein is Structure-specific endonuclease subunit SLX4.